The following is a 77-amino-acid chain: Exodeoxyribonuclease 7 small subunit (77 aa).

This sequence belongs to the XseB family. Heterooligomer composed of large and small subunits.

The protein localises to the cytoplasm. It catalyses the reaction Exonucleolytic cleavage in either 5'- to 3'- or 3'- to 5'-direction to yield nucleoside 5'-phosphates.. Its function is as follows. Bidirectionally degrades single-stranded DNA into large acid-insoluble oligonucleotides, which are then degraded further into small acid-soluble oligonucleotides. In Lysinibacillus sphaericus (strain C3-41), this protein is Exodeoxyribonuclease 7 small subunit.